We begin with the raw amino-acid sequence, 957 residues long: Valine--tRNA ligase (957 aa).

Positions 45–55 match the 'HIGH' region motif; sequence PNVTGSLHMGH. A 'KMSKS' region motif is present at residues 571 to 575; it reads KMSKS. Residue K574 coordinates ATP. Positions 887-946 form a coiled coil; the sequence is VVDFAAEQARLEKELGKAEADIKRAEAKLANEKFVANAAEEVVEEEREKREAAVARKVKI.

This sequence belongs to the class-I aminoacyl-tRNA synthetase family. ValS type 1 subfamily. Monomer.

Its subcellular location is the cytoplasm. It carries out the reaction tRNA(Val) + L-valine + ATP = L-valyl-tRNA(Val) + AMP + diphosphate. In terms of biological role, catalyzes the attachment of valine to tRNA(Val). As ValRS can inadvertently accommodate and process structurally similar amino acids such as threonine, to avoid such errors, it has a 'posttransfer' editing activity that hydrolyzes mischarged Thr-tRNA(Val) in a tRNA-dependent manner. The protein is Valine--tRNA ligase of Rhodopseudomonas palustris (strain ATCC BAA-98 / CGA009).